The following is a 216-amino-acid chain: Fucoxanthin-chlorophyll a-c binding protein C, chloroplastic (216 aa).

The transit peptide at 1-38 (MKSAIMAVASAAPGLRGPSAFNGAALTTSAKSSSAMKM) directs the protein to the chloroplast. 3 helical membrane-spanning segments follow: residues 80 to 100 (IAML…PGML), 121 to 141 (IPPG…LAVM), and 182 to 202 (GRAA…NNKP).

It belongs to the fucoxanthin chlorophyll protein family. In terms of assembly, the LHC complex of chromophytic algae is composed of fucoxanthin, chlorophyll A and C bound non-covalently by fucoxanthin chlorophyll proteins (FCPs). The ratio of pigments in this LHC is; fucoxanthin: chlorophyll C: chlorophyll A; (0.6-1): (0.1-0.3): (1).

The protein resides in the plastid. It localises to the chloroplast thylakoid membrane. Its function is as follows. The light-harvesting complex (LHC) functions as a light receptor, it captures and delivers excitation energy to photosystems with which it is closely associated. Energy is transferred from the carotenoid and chlorophyll C (or B) to chlorophyll A and the photosynthetic reaction centers where it is used to synthesize ATP and reducing power. This chain is Fucoxanthin-chlorophyll a-c binding protein C, chloroplastic (FCPC), found in Macrocystis pyrifera (Giant kelp).